A 128-amino-acid chain; its full sequence is Transmembrane protein 234 homolog (128 aa).

A run of 4 helical transmembrane segments spans residues 3-23 (TYNIISLLLVGFIWGGTNPLI), 53-73 (PSYTIPMLINLSGSVVFFYTL), 80-100 (LVVPISNSLTFLFTSLMGMLL), and 104-124 (VLHFKSYLGMIFVLAGVTICV).

Belongs to the TMEM234 family.

The protein localises to the membrane. The sequence is that of Transmembrane protein 234 homolog from Dictyostelium discoideum (Social amoeba).